Here is a 383-residue protein sequence, read N- to C-terminus: Acyl-CoA dehydrogenase, short-chain specific (383 aa).

The Proton acceptor role is filled by E367.

Belongs to the acyl-CoA dehydrogenase family. As to quaternary structure, homotetramer. FAD is required as a cofactor.

The catalysed reaction is butanoyl-CoA + oxidized [electron-transfer flavoprotein] + H(+) = (2E)-butenoyl-CoA + reduced [electron-transfer flavoprotein]. The enzyme catalyses a short-chain 2,3-saturated fatty acyl-CoA + oxidized [electron-transfer flavoprotein] + H(+) = a short-chain (2E)-enoyl-CoA + reduced [electron-transfer flavoprotein]. Has an optimum specificity for 4-carbon length fatty acyl-CoAs. In Megasphaera elsdenii, this protein is Acyl-CoA dehydrogenase, short-chain specific.